Consider the following 142-residue polypeptide: Small ribosomal subunit protein bS6 (142 aa).

The tract at residues 110–142 (NKKPSHAKEKHEKTEHAHSHHAEEAKSTESHSE) is disordered.

Belongs to the bacterial ribosomal protein bS6 family.

In terms of biological role, binds together with bS18 to 16S ribosomal RNA. The polypeptide is Small ribosomal subunit protein bS6 (Helicobacter pylori (strain G27)).